A 953-amino-acid chain; its full sequence is Serine/threonine-protein kinase ppk30 (953 aa).

Residues 57–326 (VIIQRYLSEG…IYQTLKEIME (270 aa)) enclose the Protein kinase domain. ATP contacts are provided by residues 63–71 (LSEGGFSHV) and K85. D187 serves as the catalytic Proton acceptor. 6 disordered regions span residues 343–402 (ASTY…PSVS), 427–451 (SPIPATKSYSATIQTPRSPSLRRAD), 538–606 (RFLP…NRMN), 641–669 (RKEPFTPAVPSAKSGLKKDQSSEVANKDV), 748–791 (STSQ…RPIG), and 864–953 (RKSC…ESLE). Composition is skewed to polar residues over residues 355 to 369 (RTPSGSLTPLSSRPA), 378 to 402 (TVQTTSSNVPPVNRPSLKSKSPSVS), and 433 to 444 (KSYSATIQTPRS). Residues 547-557 (PSEFSSSVGSK) are compositionally biased toward low complexity. Over residues 558 to 575 (QNLSMDIPSVQNVSTKQK) the composition is skewed to polar residues. A compositionally biased stretch (basic and acidic residues) spans 656–669 (LKKDQSSEVANKDV). The segment covering 748 to 766 (STSQVSHTQRLQQSISTSL) has biased composition (polar residues). Composition is skewed to basic and acidic residues over residues 767–778 (ERVKSNTKKESN), 865–884 (KSCETQRSRKSHEGSNDLER), and 937–953 (PHIERLNLFHTKSESLE). S872 and S875 each carry phosphoserine.

Belongs to the protein kinase superfamily. Ser/Thr protein kinase family.

The protein localises to the cytoplasm. The catalysed reaction is L-seryl-[protein] + ATP = O-phospho-L-seryl-[protein] + ADP + H(+). It carries out the reaction L-threonyl-[protein] + ATP = O-phospho-L-threonyl-[protein] + ADP + H(+). The chain is Serine/threonine-protein kinase ppk30 (ppk30) from Schizosaccharomyces pombe (strain 972 / ATCC 24843) (Fission yeast).